Consider the following 842-residue polypeptide: Valine--tRNA ligase (842 aa).

The 'HIGH' region signature appears at 86 to 96; the sequence is PFTSGELHMGH. The short motif at 572 to 576 is the 'KMSKS' region element; it reads RMSKS. Residue Lys-575 coordinates ATP.

It belongs to the class-I aminoacyl-tRNA synthetase family. ValS type 2 subfamily.

It localises to the cytoplasm. It catalyses the reaction tRNA(Val) + L-valine + ATP = L-valyl-tRNA(Val) + AMP + diphosphate. Functionally, catalyzes the attachment of valine to tRNA(Val). As ValRS can inadvertently accommodate and process structurally similar amino acids such as threonine, to avoid such errors, it has a 'posttransfer' editing activity that hydrolyzes mischarged Thr-tRNA(Val) in a tRNA-dependent manner. The polypeptide is Valine--tRNA ligase (Saccharolobus solfataricus (strain ATCC 35092 / DSM 1617 / JCM 11322 / P2) (Sulfolobus solfataricus)).